The sequence spans 396 residues: Elongation factor Tu (396 aa).

Positions 10–206 (KPHVNIGTIG…AVDESVPDPI (197 aa)) constitute a tr-type G domain. Residues 19–26 (GHVDHGKT) are G1. 19-26 (GHVDHGKT) is a binding site for GTP. Mg(2+) is bound at residue T26. A G2 region spans residues 62 to 66 (GITIN). The tract at residues 83–86 (DAPG) is G3. GTP contacts are provided by residues 83–87 (DAPGH) and 138–141 (NKSD). Positions 138 to 141 (NKSD) are G4. A G5 region spans residues 176–178 (SGL).

This sequence belongs to the TRAFAC class translation factor GTPase superfamily. Classic translation factor GTPase family. EF-Tu/EF-1A subfamily. As to quaternary structure, monomer.

It localises to the cytoplasm. The catalysed reaction is GTP + H2O = GDP + phosphate + H(+). Functionally, GTP hydrolase that promotes the GTP-dependent binding of aminoacyl-tRNA to the A-site of ribosomes during protein biosynthesis. The sequence is that of Elongation factor Tu from Renibacterium salmoninarum (strain ATCC 33209 / DSM 20767 / JCM 11484 / NBRC 15589 / NCIMB 2235).